Here is a 406-residue protein sequence, read N- to C-terminus: Probable transcription factor FPSE_09188 (406 aa).

Residues 1-72 (MELPTYAVSQ…PKGSSSRCNG (72 aa)) form a disordered region. A compositionally biased stretch (low complexity) spans 7-20 (AVSQSLLASRSVSS).

Belongs to the bZIP family.

The protein resides in the nucleus. In terms of biological role, the two putative transcription factors FPSE_09188 and FPSE_09189 could be responsible for orchestrating expression of the W493 A and B biosynthesis cluster genes. W493 A and B consist of six amino acid residues D-allo-thr, L-Ala, D-Ala, L-Gln, D-Tyr, and L-Val/L-Ile linked to a 3-hydroxy-4-methyltetradecanoic acid polyketide chain. In Fusarium pseudograminearum (strain CS3096) (Wheat and barley crown-rot fungus), this protein is Probable transcription factor FPSE_09188.